We begin with the raw amino-acid sequence, 328 residues long: GTPase Obg 2 (328 aa).

An Obg domain is found at 1–139 (MSFRREKFIE…HCVLLKLKIV (139 aa)). In terms of domain architecture, OBG-type G spans 140–309 (SDVGIIGMPN…LHAQVKKAVV (170 aa)). Residues 146 to 153 (GMPNAGKS), 171 to 175 (FTTLE), 192 to 195 (DIPG), 259 to 262 (NKCD), and 290 to 292 (GDE) each bind GTP. Mg(2+) is bound by residues serine 153 and threonine 173.

Belongs to the TRAFAC class OBG-HflX-like GTPase superfamily. OBG GTPase family. Monomer. It depends on Mg(2+) as a cofactor.

It is found in the cytoplasm. An essential GTPase which binds GTP, GDP and possibly (p)ppGpp with moderate affinity, with high nucleotide exchange rates and a fairly low GTP hydrolysis rate. Plays a role in control of the cell cycle, stress response, ribosome biogenesis and in those bacteria that undergo differentiation, in morphogenesis control. This chain is GTPase Obg 2, found in Anaplasma marginale (strain St. Maries).